The following is a 178-amino-acid chain: Ribosome maturation factor RimP (178 aa).

The protein belongs to the RimP family.

The protein localises to the cytoplasm. Functionally, required for maturation of 30S ribosomal subunits. The polypeptide is Ribosome maturation factor RimP (Streptococcus pyogenes serotype M5 (strain Manfredo)).